Reading from the N-terminus, the 561-residue chain is uncharacterized protein (561 aa).

The span at 314–323 (ANNGSGDSSS) shows a compositional bias: low complexity. Residues 314-366 (ANNGSGDSSSTALNNESPNTTPKSRTFFSPKGHRRNSSHVSSLTSRSTKKPIT) are disordered. Positions 324 to 340 (TALNNESPNTTPKSRTF) are enriched in polar residues. Ser-514 carries the post-translational modification Phosphoserine.

It is found in the cytoplasm. This is an uncharacterized protein from Saccharomyces cerevisiae (strain ATCC 204508 / S288c) (Baker's yeast).